The sequence spans 876 residues: Valine--tRNA ligase (876 aa).

Positions 43-53 match the 'HIGH' region motif; the sequence is PNVTGVLHMGH. Residues 534-538 carry the 'KMSKS' region motif; it reads KMSKS. Lysine 537 lines the ATP pocket. A coiled-coil region spans residues 847–876; sequence PEKVVAIEKAKKADAEAKIEALKASLKSLS.

It belongs to the class-I aminoacyl-tRNA synthetase family. ValS type 1 subfamily. As to quaternary structure, monomer.

The protein resides in the cytoplasm. The enzyme catalyses tRNA(Val) + L-valine + ATP = L-valyl-tRNA(Val) + AMP + diphosphate. In terms of biological role, catalyzes the attachment of valine to tRNA(Val). As ValRS can inadvertently accommodate and process structurally similar amino acids such as threonine, to avoid such errors, it has a 'posttransfer' editing activity that hydrolyzes mischarged Thr-tRNA(Val) in a tRNA-dependent manner. The protein is Valine--tRNA ligase of Christiangramia forsetii (strain DSM 17595 / CGMCC 1.15422 / KT0803) (Gramella forsetii).